We begin with the raw amino-acid sequence, 976 residues long: Mast/stem cell growth factor receptor Kit (976 aa).

An N-terminal signal peptide occupies residues 1-25 (MRGARGAWDFLCVLLLLLRVQTGSS). Over 26-524 (QPSVSPGEPS…QIHPHTLFTP (499 aa)) the chain is Extracellular. Ig-like C2-type domains follow at residues 27–112 (PSVS…VFVR), 121–205 (DRSL…LKVR), 212–308 (PVVS…LEVV), 317–410 (PMIN…VYVN), and 413–507 (PEIL…FNFA). C58 and C97 form a disulfide bridge. 2 N-linked (GlcNAc...) asparagine glycosylation sites follow: N130 and N145. 3 disulfide bridges follow: C136–C186, C151–C183, and C233–C290. N283, N293, N300, N320, N352, N367, N463, and N486 each carry an N-linked (GlcNAc...) asparagine glycan. An intrachain disulfide couples C428 to C491. A helical transmembrane segment spans residues 525 to 545 (LLIGFVIVAGMMCIIVMILTY). Residues 546 to 976 (KYLQKPMYEV…SQPLLVHDDV (431 aa)) lie on the Cytoplasmic side of the membrane. Phosphotyrosine; by autocatalysis is present on residues Y547, Y553, Y568, and Y570. Y568 contributes to the Mg(2+) binding site. An important for interaction with phosphotyrosine-binding proteins region spans residues 568–570 (YVY). Residues 589 to 937 (LSFGKTLGAG…ISESTNHIYS (349 aa)) enclose the Protein kinase domain. ATP contacts are provided by residues 596 to 603 (GAGAFGKV), K623, and 671 to 677 (EYCCYGD). 3 positions are modified to phosphotyrosine; by autocatalysis: Y703, Y721, and Y730. Phosphoserine; by PKC/PRKCA occurs at positions 741 and 746. D792 functions as the Proton acceptor in the catalytic mechanism. An ATP-binding site is contributed by R796. Residues N797 and D810 each contribute to the Mg(2+) site. The residue at position 821 (S821) is a Phosphoserine. Y823 is subject to Phosphotyrosine; by autocatalysis. The residue at position 891 (S891) is a Phosphoserine. Phosphotyrosine; by autocatalysis occurs at positions 900 and 936. A Phosphoserine modification is found at S959.

It belongs to the protein kinase superfamily. Tyr protein kinase family. CSF-1/PDGF receptor subfamily. Monomer in the absence of bound KITLG/SCF. Homodimer in the presence of bound KITLG/SCF, forming a heterotetramer with two KITLG/SCF molecules. Interacts (via phosphorylated tyrosine residues) with the adapter proteins GRB2 and GRB7 (via SH2 domain), and SH2B2/APS. Interacts (via C-terminus) with MPDZ (via the tenth PDZ domain). Interacts (via phosphorylated tyrosine residues) with PIK3R1 and PIK3 catalytic subunit. Interacts (via phosphorylated tyrosine) with CRK (isoform Crk-II), FYN, SHC1 and MATK/CHK (via SH2 domain). Interacts with LYN and FES/FPS. Interacts (via phosphorylated tyrosine residues) with the protein phosphatases PTPN6/SHP-1 (via SH2 domain), PTPN11/SHP-2 (via SH2 domain) and PTPRU. Interacts with PLCG1. Interacts with DOK1 and TEC. Interacts (KITLG/SCF-bound) with IL1RL1. Interacts with IL1RAP (independent of stimulation with KITLG/SCF). A mast cell-specific KITLG/SCF-induced interleukin-33 signaling complex contains IL1RL1, IL1RAP, KIT and MYD88. Ubiquitinated by SOCS6. KIT is rapidly ubiquitinated after autophosphorylation induced by KITLG/SCF binding, leading to internalization and degradation. Post-translationally, autophosphorylated on tyrosine residues. KITLG/SCF binding enhances autophosphorylation. Isoform 1 shows low levels of tyrosine phosphorylation in the absence of added KITLG/SCF (in vitro). Kinase activity is down-regulated by phosphorylation on serine residues by protein kinase C family members. Phosphorylation at Tyr-568 is required for interaction with PTPN11/SHP-2, CRK (isoform Crk-II) and members of the SRC tyrosine-protein kinase family. Phosphorylation at Tyr-570 is required for interaction with PTPN6/SHP-1. Phosphorylation at Tyr-703, Tyr-823 and Tyr-936 is important for interaction with GRB2. Phosphorylation at Tyr-721 is important for interaction with PIK3R1. Phosphorylation at Tyr-823 and Tyr-936 is important for interaction with GRB7. In testis, detected in spermatogonia in the basal layer and in interstitial Leydig cells but not in Sertoli cells or spermatocytes inside the seminiferous tubules (at protein level). Expression is maintained in ejaculated spermatozoa (at protein level).

The protein resides in the cell membrane. The protein localises to the cytoplasm. The enzyme catalyses L-tyrosyl-[protein] + ATP = O-phospho-L-tyrosyl-[protein] + ADP + H(+). With respect to regulation, present in an inactive conformation in the absence of bound ligand. KITLG/SCF binding leads to dimerization and activation by autophosphorylation on tyrosine residues. Activity is down-regulated by PRKCA-mediated phosphorylation on serine residues. Inhibited by imatinib/STI-571 (Gleevec) and sunitinib; these compounds maintain the kinase in an inactive conformation. In terms of biological role, tyrosine-protein kinase that acts as a cell-surface receptor for the cytokine KITLG/SCF and plays an essential role in the regulation of cell survival and proliferation, hematopoiesis, stem cell maintenance, gametogenesis, mast cell development, migration and function, and in melanogenesis. In response to KITLG/SCF binding, KIT can activate several signaling pathways. Phosphorylates PIK3R1, PLCG1, SH2B2/APS and CBL. Activates the AKT1 signaling pathway by phosphorylation of PIK3R1, the regulatory subunit of phosphatidylinositol 3-kinase. Activated KIT also transmits signals via GRB2 and activation of RAS, RAF1 and the MAP kinases MAPK1/ERK2 and/or MAPK3/ERK1. Promotes activation of STAT family members STAT1, STAT3, STAT5A and STAT5B. Activation of PLCG1 leads to the production of the cellular signaling molecules diacylglycerol and inositol 1,4,5-trisphosphate. KIT signaling is modulated by protein phosphatases, and by rapid internalization and degradation of the receptor. Activated KIT promotes phosphorylation of the protein phosphatases PTPN6/SHP-1 and PTPRU, and of the transcription factors STAT1, STAT3, STAT5A and STAT5B. Promotes phosphorylation of PIK3R1, CBL, CRK (isoform Crk-II), LYN, MAPK1/ERK2 and/or MAPK3/ERK1, PLCG1, SRC and SHC1. This Homo sapiens (Human) protein is Mast/stem cell growth factor receptor Kit (KIT).